The following is a 199-amino-acid chain: Pyridoxal 5'-phosphate synthase subunit PdxT (199 aa).

L-glutamine is bound at residue 49–51; the sequence is GES. Residue Cys-81 is the Nucleophile of the active site. L-glutamine is bound by residues Arg-110 and 139–140; that span reads IR. Catalysis depends on charge relay system residues His-175 and Glu-177.

The protein belongs to the glutaminase PdxT/SNO family. In terms of assembly, in the presence of PdxS, forms a dodecamer of heterodimers. Only shows activity in the heterodimer.

The enzyme catalyses aldehydo-D-ribose 5-phosphate + D-glyceraldehyde 3-phosphate + L-glutamine = pyridoxal 5'-phosphate + L-glutamate + phosphate + 3 H2O + H(+). It carries out the reaction L-glutamine + H2O = L-glutamate + NH4(+). The protein operates within cofactor biosynthesis; pyridoxal 5'-phosphate biosynthesis. Catalyzes the hydrolysis of glutamine to glutamate and ammonia as part of the biosynthesis of pyridoxal 5'-phosphate. The resulting ammonia molecule is channeled to the active site of PdxS. This Frankia alni (strain DSM 45986 / CECT 9034 / ACN14a) protein is Pyridoxal 5'-phosphate synthase subunit PdxT.